The chain runs to 865 residues: Bifunctional uridylyltransferase/uridylyl-removing enzyme (865 aa).

The tract at residues 1-318 is uridylyltransferase; it reads MPHVDLNPLK…FPRPDSDARL (318 aa). The uridylyl-removing stretch occupies residues 319 to 675; the sequence is IDDDFRNLRE…VRPTEHGEGL (357 aa). The HD domain maps to 437 to 559; sequence VDQHTLAVVR…VGDERRLAAL (123 aa). 2 consecutive ACT domains span residues 676–762 and 789–865; these read QVMV…RLPH and RLSV…QQAA. The tract at residues 747–767 is disordered; it reads DPHAARHAHAPRRLPHSHARR. The span at 751-767 shows a compositional bias: basic residues; it reads ARHAHAPRRLPHSHARR.

The protein belongs to the GlnD family. Mg(2+) is required as a cofactor.

The enzyme catalyses [protein-PII]-L-tyrosine + UTP = [protein-PII]-uridylyl-L-tyrosine + diphosphate. It carries out the reaction [protein-PII]-uridylyl-L-tyrosine + H2O = [protein-PII]-L-tyrosine + UMP + H(+). Its activity is regulated as follows. Uridylyltransferase (UTase) activity is inhibited by glutamine, while glutamine activates uridylyl-removing (UR) activity. Modifies, by uridylylation and deuridylylation, the PII regulatory proteins (GlnB and homologs), in response to the nitrogen status of the cell that GlnD senses through the glutamine level. Under low glutamine levels, catalyzes the conversion of the PII proteins and UTP to PII-UMP and PPi, while under higher glutamine levels, GlnD hydrolyzes PII-UMP to PII and UMP (deuridylylation). Thus, controls uridylylation state and activity of the PII proteins, and plays an important role in the regulation of nitrogen assimilation and metabolism. This Bordetella pertussis (strain Tohama I / ATCC BAA-589 / NCTC 13251) protein is Bifunctional uridylyltransferase/uridylyl-removing enzyme.